A 529-amino-acid polypeptide reads, in one-letter code: Glucocorticoid modulatory element-binding protein 2 (529 aa).

In terms of domain architecture, SAND spans 80–162 (EEGENLEAEI…RKIMDSGELD (83 aa)). Cysteine 109 contacts Zn(2+). DNA-binding residues include lysine 135, lysine 139, lysine 142, and arginine 153. A Glycyl lysine isopeptide (Lys-Gly) (interchain with G-Cter in SUMO1); alternate cross-link involves residue lysine 154. Residue lysine 154 forms a Glycyl lysine isopeptide (Lys-Gly) (interchain with G-Cter in SUMO2); alternate linkage. Residues histidine 166, cysteine 170, and cysteine 174 each coordinate Zn(2+). The stretch at 244–347 (LLDEVIQEFQ…HLSNVLMTLT (104 aa)) forms a coiled coil. Serine 372 bears the Phosphoserine mark.

In terms of assembly, homodimer, and heterodimer of GMEB1 and GMEB2. Interacts with the glucocorticoid receptor (NR3C1). May interact with CREB-binding protein (CBP).

Its subcellular location is the nucleus. The protein localises to the cytoplasm. In terms of biological role, trans-acting factor that binds to glucocorticoid modulatory elements (GME) present in the TAT (tyrosine aminotransferase) promoter and increases sensitivity to low concentrations of glucocorticoids. Also binds to the transferrin receptor promoter. The polypeptide is Glucocorticoid modulatory element-binding protein 2 (Gmeb2) (Rattus norvegicus (Rat)).